We begin with the raw amino-acid sequence, 498 residues long: Cytochrome c-552 (498 aa).

Positions 1 to 31 (MKNKERKLKSWQGWLIFSSSMVVVFCLGLLA) are cleaved as a signal peptide. His119 contributes to the heme c binding site. Cys148, Cys151, and Lys152 together coordinate heme. Residues Cys186, Cys189, His190, Cys228, Cys231, and His232 each contribute to the heme c site. The Ca(2+) site is built by Glu234, Tyr235, Lys280, and Gln282. Residue Tyr235 coordinates substrate. Position 283 (His283) interacts with substrate. Heme c is bound by residues His294, Cys301, Cys304, His305, His319, Cys332, Cys335, His336, and His411.

The protein belongs to the cytochrome c-552 family. Requires Ca(2+) as cofactor. Heme c is required as a cofactor.

It is found in the periplasm. It carries out the reaction 6 Fe(III)-[cytochrome c] + NH4(+) + 2 H2O = 6 Fe(II)-[cytochrome c] + nitrite + 8 H(+). It participates in nitrogen metabolism; nitrate reduction (assimilation). Its function is as follows. Catalyzes the reduction of nitrite to ammonia, consuming six electrons in the process. In Porphyromonas gingivalis (strain ATCC BAA-308 / W83), this protein is Cytochrome c-552.